Consider the following 239-residue polypeptide: MTQQIKYKRVLLKLSGESLMGSDPFGINHDTIVQTVGEIAEVVKMGVQVGIVVGGGNIFRGVSAQAGSMDRATADYMGMMATVMNALALKDAFETLGIKARVQSALSMQQIAETYARPKAIQYLEEGKVVIFAAGTGNPFFTTDTAAALRGAEMNCDVMLKATNVDGVYTADPKKDPSATRYETITFDEALLKNLKVMDATAFALCRERKLNIVVFGIAKEGSLKRVITGEDEGTLVHC.

13 to 16 (KLSG) provides a ligand contact to ATP. A UMP-binding site is contributed by Gly-55. 2 residues coordinate ATP: Gly-56 and Arg-60. UMP-binding positions include Asp-75 and 136-143 (TGNPFFTT). ATP is bound by residues Thr-163, Asn-164, Tyr-169, and Asp-172.

The protein belongs to the UMP kinase family. As to quaternary structure, homohexamer.

It localises to the cytoplasm. The enzyme catalyses UMP + ATP = UDP + ADP. Its pathway is pyrimidine metabolism; CTP biosynthesis via de novo pathway; UDP from UMP (UMPK route): step 1/1. With respect to regulation, inhibited by UTP. Its function is as follows. Catalyzes the reversible phosphorylation of UMP to UDP. This chain is Uridylate kinase, found in Neisseria meningitidis serogroup A / serotype 4A (strain DSM 15465 / Z2491).